Here is a 146-residue protein sequence, read N- to C-terminus: VHLSGEEKTALATLWGKNVADEVGGEALGRLLVVYPWTQRFFDSFGDLSSASALMSNAKVKAHGKKVLDSFSEGLKHLDDLKGTFSSLSELHCDKLHVDPENFRLLGNMLVLVMAHHLGKDFTPAAQAAYQKVVAGVANALAHKYH.

Val-1 is subject to N-acetylvaline. The region spanning 2–146 (HLSGEEKTAL…VANALAHKYH (145 aa)) is the Globin domain. At Ser-44 the chain carries Phosphoserine. Lys-59 bears the N6-acetyllysine mark. Residue His-63 participates in heme b binding. Lys-82 is subject to N6-acetyllysine. His-92 is a heme b binding site. Cys-93 carries the post-translational modification S-nitrosocysteine. Lys-144 bears the N6-acetyllysine mark.

It belongs to the globin family. As to quaternary structure, heterotetramer of two alpha chains and two beta chains. Red blood cells.

In terms of biological role, involved in oxygen transport from the lung to the various peripheral tissues. The sequence is that of Hemoglobin subunit beta from Tamiasciurus hudsonicus (American red squirrel).